Consider the following 323-residue polypeptide: UPF0612 protein C569.01c (323 aa).

Coiled coils occupy residues 27 to 63 (IKRYERSVDSTLLEIDENKREALEKYIEERDRKMKYE) and 131 to 225 (NEMN…DARS).

This sequence belongs to the UPF0612 family.

In Schizosaccharomyces pombe (strain 972 / ATCC 24843) (Fission yeast), this protein is UPF0612 protein C569.01c.